A 333-amino-acid polypeptide reads, in one-letter code: Holliday junction branch migration complex subunit RuvB (333 aa).

The large ATPase domain (RuvB-L) stretch occupies residues 4-185 (IDRLVSTDVL…FGIVQRLEFY (182 aa)). ATP is bound by residues Ile24, Arg25, Gly66, Lys69, Thr70, Thr71, 132–134 (EDY), Arg175, Tyr185, and Arg222. Thr70 contacts Mg(2+). Residues 186–256 (SVPDLEHIVS…IAIKALEMLN (71 aa)) form a small ATPAse domain (RuvB-S) region. The head domain (RuvB-H) stretch occupies residues 259–333 (KEGLDYMDSK…HAYQHFICGG (75 aa)). DNA is bound by residues Arg295, Arg314, and Arg319.

This sequence belongs to the RuvB family. As to quaternary structure, homohexamer. Forms an RuvA(8)-RuvB(12)-Holliday junction (HJ) complex. HJ DNA is sandwiched between 2 RuvA tetramers; dsDNA enters through RuvA and exits via RuvB. An RuvB hexamer assembles on each DNA strand where it exits the tetramer. Each RuvB hexamer is contacted by two RuvA subunits (via domain III) on 2 adjacent RuvB subunits; this complex drives branch migration. In the full resolvosome a probable DNA-RuvA(4)-RuvB(12)-RuvC(2) complex forms which resolves the HJ.

The protein resides in the cytoplasm. It catalyses the reaction ATP + H2O = ADP + phosphate + H(+). Functionally, the RuvA-RuvB-RuvC complex processes Holliday junction (HJ) DNA during genetic recombination and DNA repair, while the RuvA-RuvB complex plays an important role in the rescue of blocked DNA replication forks via replication fork reversal (RFR). RuvA specifically binds to HJ cruciform DNA, conferring on it an open structure. The RuvB hexamer acts as an ATP-dependent pump, pulling dsDNA into and through the RuvAB complex. RuvB forms 2 homohexamers on either side of HJ DNA bound by 1 or 2 RuvA tetramers; 4 subunits per hexamer contact DNA at a time. Coordinated motions by a converter formed by DNA-disengaged RuvB subunits stimulates ATP hydrolysis and nucleotide exchange. Immobilization of the converter enables RuvB to convert the ATP-contained energy into a lever motion, pulling 2 nucleotides of DNA out of the RuvA tetramer per ATP hydrolyzed, thus driving DNA branch migration. The RuvB motors rotate together with the DNA substrate, which together with the progressing nucleotide cycle form the mechanistic basis for DNA recombination by continuous HJ branch migration. Branch migration allows RuvC to scan DNA until it finds its consensus sequence, where it cleaves and resolves cruciform DNA. The chain is Holliday junction branch migration complex subunit RuvB from Hamiltonella defensa subsp. Acyrthosiphon pisum (strain 5AT).